The sequence spans 715 residues: Targeting protein for Xklp2-B (715 aa).

Residues 36–167 (NAENIPPDQK…LTMPATPTVL (132 aa)) form a disordered region. Residues 47–56 (LSETSVNAEQ) are compositionally biased toward polar residues. The span at 85 to 103 (QTKRSARRMSKKHRQKILL) shows a compositional bias: basic residues. The span at 104–115 (KMKETHLEKETA) shows a compositional bias: basic and acidic residues. Positions 141-152 (QPTSSHHGTTSP) are enriched in polar residues. At serine 204 the chain carries Phosphoserine; by plk1. 2 disordered regions span residues 260 to 291 (PPTSPVQVTKGGHTVPKPFNLSKGKRKHEEAS) and 314 to 337 (RSRQKEMEGPSPVKMLKPKLTNPK).

It belongs to the TPX2 family. Associates with microtubules. Interacts with aurka and plk1. Interacts with kif15. In terms of processing, phosphorylated during mitosis. Hyperphosphorylated upon assembly of microtubules.

Its subcellular location is the nucleus. The protein resides in the cytoplasm. The protein localises to the cytoskeleton. It localises to the spindle. It is found in the spindle pole. In terms of biological role, spindle assembly factor. Required for normal assembly of mitotic spindles. Mediates the binding kif15 and aurka to spindle microtubules. Required for targeting kif15 to microtubule minus ends. Activates aurka by promoting its autophosphorylation and protects the phosphorylated residue against dephosphorylation. This chain is Targeting protein for Xklp2-B (tpx2-b), found in Xenopus laevis (African clawed frog).